A 395-amino-acid polypeptide reads, in one-letter code: Methylmalonyl-CoA decarboxylase subunit beta (395 aa).

The next 9 helical transmembrane spans lie at 17 to 37 (LNMGSIIMMLVACVFLYLAIA), 43 to 63 (LLLVPISFGILLTNLPFAGMM), 103 to 123 (GIFPPLIFLGVGAMTDFGPLI), 128 to 148 (SLLLGAAAQFGIFVTFFGAIA), 180 to 200 (PHLMGPIAVAAYSYMALVPII), 230 to 250 (IIFPIVVTILVSLIVPPAATL), 278 to 298 (INIITIFLGVTVGATATAEAF), 304 to 324 (LAILGLGIVAFGIGTGSGVLL), and 374 to 394 (GPNVAGVIGSAVSAGVLLSLF).

It belongs to the GcdB/MmdB/OadB family. As to quaternary structure, the methylmalonyl-CoA decarboxylase is composed of four subunits: the carboxyltransferase alpha subunit (MmdA), the tunnel beta subunit (MmdB), the biotin-containing gamma subunit (MmdC) and the delta subunit (MmdD). Post-translationally, the N-terminus is blocked.

The protein resides in the cell membrane. The enzyme catalyses (S)-methylmalonyl-CoA + Na(+)(in) + H(+)(out) = propanoyl-CoA + Na(+)(out) + CO2. In terms of biological role, tunnel subunit of the sodium ion pump methylmalonyl-CoA decarboxylase, which converts the chemical energy of a decarboxylation reaction into an electrochemical gradient of Na(+) ions across the cytoplasmic membrane, thereby creating a sodium ion motive force that is used for ATP synthesis. The beta subunit catalyzes the decarboxylation of the carboxybiotin carrier protein and the coupled export of Na(+) ions. This Propionigenium modestum protein is Methylmalonyl-CoA decarboxylase subunit beta.